We begin with the raw amino-acid sequence, 319 residues long: Pantothenate kinase (319 aa).

G96–S103 is a binding site for ATP.

The protein belongs to the prokaryotic pantothenate kinase family.

It is found in the cytoplasm. It carries out the reaction (R)-pantothenate + ATP = (R)-4'-phosphopantothenate + ADP + H(+). It participates in cofactor biosynthesis; coenzyme A biosynthesis; CoA from (R)-pantothenate: step 1/5. The sequence is that of Pantothenate kinase (coaA) from Bacillus subtilis (strain 168).